We begin with the raw amino-acid sequence, 252 residues long: C4b-binding protein beta chain (252 aa).

A signal peptide spans 1–17 (MFFWCACCLMVAWRVSA). Sushi domains lie at 21–78 (EHCP…ECRL), 79–136 (GHCP…ICKS), and 137–193 (RDCD…VCKL). Intrachain disulfides connect cysteine 23–cysteine 63, cysteine 49–cysteine 76, cysteine 81–cysteine 121, cysteine 107–cysteine 134, cysteine 139–cysteine 179, and cysteine 165–cysteine 191. N-linked (GlcNAc...) asparagine glycosylation is found at asparagine 64, asparagine 71, asparagine 98, asparagine 117, and asparagine 154.

In terms of assembly, disulfide-linked complex of alpha and beta chains of 3 possible sorts: a 570 kDa complex of 7 alpha chains and 1 beta chain, a 530 kDa homoheptamer of alpha chains or a 500 kDa complex of 6 alpha chains and 1 beta chain. The central body of the alpha chain homomer supports tentacles, each with the binding site for C4b at the end.

Its subcellular location is the secreted. Controls the classical pathway of complement activation. It binds as a cofactor to C3b/C4b inactivator (C3bINA), which then hydrolyzes the complement fragment C4b. It also accelerates the degradation of the C4bC2a complex (C3 convertase) by dissociating the complement fragment C2a. It also interacts with anticoagulant protein S and with serum amyloid P component. The beta chain binds protein S. The polypeptide is C4b-binding protein beta chain (C4BPB) (Homo sapiens (Human)).